Reading from the N-terminus, the 154-residue chain is 3-hydroxyacyl-[acyl-carrier-protein] dehydratase FabZ (154 aa).

Residue His54 is part of the active site.

The protein belongs to the thioester dehydratase family. FabZ subfamily.

It is found in the cytoplasm. The catalysed reaction is a (3R)-hydroxyacyl-[ACP] = a (2E)-enoyl-[ACP] + H2O. In terms of biological role, involved in unsaturated fatty acids biosynthesis. Catalyzes the dehydration of short chain beta-hydroxyacyl-ACPs and long chain saturated and unsaturated beta-hydroxyacyl-ACPs. This chain is 3-hydroxyacyl-[acyl-carrier-protein] dehydratase FabZ, found in Shewanella oneidensis (strain ATCC 700550 / JCM 31522 / CIP 106686 / LMG 19005 / NCIMB 14063 / MR-1).